Here is a 297-residue protein sequence, read N- to C-terminus: 4-hydroxy-tetrahydrodipicolinate synthase (297 aa).

Thr-47 lines the pyruvate pocket. Tyr-136 acts as the Proton donor/acceptor in catalysis. The active-site Schiff-base intermediate with substrate is the Lys-165. Ile-206 serves as a coordination point for pyruvate.

It belongs to the DapA family. In terms of assembly, homotetramer; dimer of dimers.

The protein resides in the cytoplasm. The catalysed reaction is L-aspartate 4-semialdehyde + pyruvate = (2S,4S)-4-hydroxy-2,3,4,5-tetrahydrodipicolinate + H2O + H(+). It participates in amino-acid biosynthesis; L-lysine biosynthesis via DAP pathway; (S)-tetrahydrodipicolinate from L-aspartate: step 3/4. Its function is as follows. Catalyzes the condensation of (S)-aspartate-beta-semialdehyde [(S)-ASA] and pyruvate to 4-hydroxy-tetrahydrodipicolinate (HTPA). The chain is 4-hydroxy-tetrahydrodipicolinate synthase from Campylobacter concisus (strain 13826).